A 228-amino-acid polypeptide reads, in one-letter code: MSDPVLALRGLERVYKTEAGDLPVLRGVDLDVYPGEVVGLIGPSGSGKSSLLHSAGLLERPDAGLVALEGRDCSKLSERARTRIRLGTVGFVYQFHHLLPEFSALENVAMPLTIAGKSRREAEARARELLESLGLGHRLNHQPAQMSGGEQQRVAIARALANRPKLLLADEPTGNLDPATSTAVFQALYQVCREQGVAAVIATHNMELARYMDRVVALKDGHLELQRV.

One can recognise an ABC transporter domain in the interval 9 to 228 (RGLERVYKTE…KDGHLELQRV (220 aa)). 42-49 (GPSGSGKS) lines the ATP pocket.

It belongs to the ABC transporter superfamily. Lipoprotein translocase (TC 3.A.1.125) family. As to quaternary structure, the complex is composed of two ATP-binding proteins (LolD) and two transmembrane proteins (LolC and LolE).

Its subcellular location is the cell inner membrane. Its function is as follows. Part of the ABC transporter complex LolCDE involved in the translocation of mature outer membrane-directed lipoproteins, from the inner membrane to the periplasmic chaperone, LolA. Responsible for the formation of the LolA-lipoprotein complex in an ATP-dependent manner. In Caulobacter vibrioides (strain ATCC 19089 / CIP 103742 / CB 15) (Caulobacter crescentus), this protein is Lipoprotein-releasing system ATP-binding protein LolD 2.